Here is a 317-residue protein sequence, read N- to C-terminus: DNA-directed RNA polymerase subunit alpha (317 aa).

The alpha N-terminal domain (alpha-NTD) stretch occupies residues 1-234 (MKQFNKPEFG…SHFDVFTTLA (234 aa)). The interval 249–317 (EEKELDKPVE…AALELTFKQN (69 aa)) is alpha C-terminal domain (alpha-CTD).

It belongs to the RNA polymerase alpha chain family. In terms of assembly, homodimer. The RNAP catalytic core consists of 2 alpha, 1 beta, 1 beta' and 1 omega subunit. When a sigma factor is associated with the core the holoenzyme is formed, which can initiate transcription.

The enzyme catalyses RNA(n) + a ribonucleoside 5'-triphosphate = RNA(n+1) + diphosphate. Its function is as follows. DNA-dependent RNA polymerase catalyzes the transcription of DNA into RNA using the four ribonucleoside triphosphates as substrates. The protein is DNA-directed RNA polymerase subunit alpha of Mesoplasma florum (strain ATCC 33453 / NBRC 100688 / NCTC 11704 / L1) (Acholeplasma florum).